Here is a 427-residue protein sequence, read N- to C-terminus: MSAIVDIIGREILDSRGNPTVECDVLLESGTMGRAAVPSGASTGSREAIELRDGEAGRYNGKGVLKAVEHINTEISEAIMGLDASEQAFLDKTLLELDGTDNKSRLGANAMLAVSMAVAKAAAEEAGLPLYRYFGGSGAMQLPVPMMNIVNGGAHANNSLDIQEFMIVPVSQPTFREALRCGAEVFHALKKILGDRGMSTAVGDEGGFAPNFGSNDECLSTILQAIEKAGYRAGEDVLLALDCAASEFYHDGKYQLAGEGLQLSSAEFSDYLATLADKFPIVSIEDGMHESDWDGWKLLTDRLGKKVQLVGDDLFVTNTRILKEGIEKGIANSILIKINQIGTLTETFAAIEMAKRARYTAVISHRSGETEDSTIADIAVGLNAGQIKTGSLSRSDRISKYNQLLRIEEDLGDIASYPGKSAFYNLR.

Glutamine 163 serves as a coordination point for (2R)-2-phosphoglycerate. Glutamate 205 functions as the Proton donor in the catalytic mechanism. Residues aspartate 242, glutamate 285, and aspartate 312 each coordinate Mg(2+). (2R)-2-phosphoglycerate is bound by residues lysine 337, arginine 366, serine 367, and lysine 388. Lysine 337 acts as the Proton acceptor in catalysis.

This sequence belongs to the enolase family. The cofactor is Mg(2+).

Its subcellular location is the cytoplasm. It is found in the secreted. The protein resides in the cell surface. It catalyses the reaction (2R)-2-phosphoglycerate = phosphoenolpyruvate + H2O. It participates in carbohydrate degradation; glycolysis; pyruvate from D-glyceraldehyde 3-phosphate: step 4/5. Functionally, catalyzes the reversible conversion of 2-phosphoglycerate (2-PG) into phosphoenolpyruvate (PEP). It is essential for the degradation of carbohydrates via glycolysis. The sequence is that of Enolase from Burkholderia thailandensis (strain ATCC 700388 / DSM 13276 / CCUG 48851 / CIP 106301 / E264).